The primary structure comprises 233 residues: Protein Mis18-alpha (233 aa).

S36, S39, and S40 each carry phosphoserine. Residues 80–178 (PLVFLCSGCR…SVEAIESYVL (99 aa)) form the Mis18 domain. Residues C85, C88, C141, and C144 each coordinate Zn(2+). A Glycyl lysine isopeptide (Lys-Gly) (interchain with G-Cter in SUMO2) cross-link involves residue K162. Residue S233 is modified to Phosphoserine.

Belongs to the mis18 family. As to quaternary structure, homodimer, and heterodimer with OIP5/MIS18B. Identified in a complex containing MIS18A, OIP5/MIS18B, MIS18BP1, RBBP7 and RBBP4. Detected in testis.

It localises to the nucleus. The protein localises to the chromosome. It is found in the centromere. Its function is as follows. Required for recruitment of CENPA to centromeres and normal chromosome segregation during mitosis. The polypeptide is Protein Mis18-alpha (MIS18A) (Homo sapiens (Human)).